The chain runs to 275 residues: Tryptophan synthase alpha chain (275 aa).

Catalysis depends on proton acceptor residues glutamate 49 and aspartate 60.

It belongs to the TrpA family. Tetramer of two alpha and two beta chains.

The enzyme catalyses (1S,2R)-1-C-(indol-3-yl)glycerol 3-phosphate + L-serine = D-glyceraldehyde 3-phosphate + L-tryptophan + H2O. Its pathway is amino-acid biosynthesis; L-tryptophan biosynthesis; L-tryptophan from chorismate: step 5/5. In terms of biological role, the alpha subunit is responsible for the aldol cleavage of indoleglycerol phosphate to indole and glyceraldehyde 3-phosphate. The sequence is that of Tryptophan synthase alpha chain from Psychrobacter sp. (strain PRwf-1).